Here is a 373-residue protein sequence, read N- to C-terminus: Inhibitor of nuclear factor kappa-B kinase-interacting protein (373 aa).

Positions 1–11 (MSEVKSRKKPG) are enriched in basic residues. The tract at residues 1–38 (MSEVKSRKKPGPKVAAPEPEKRSDGRKNPEARGDAGWA) is disordered. Positions 18-33 (EPEKRSDGRKNPEARG) are enriched in basic and acidic residues. A helical membrane pass occupies residues 43–59 (GLSLLSLAMTLGLAWLV). Coiled-coil stretches lie at residues 86–257 (LQSK…NKLS) and 285–324 (QDLI…TLEG). N151 is a glycosylation site (N-linked (GlcNAc...) asparagine).

In terms of processing, N-glycosylated at Asn-151.

It is found in the endoplasmic reticulum membrane. Target of p53/TP53 with pro-apoptotic function. This chain is Inhibitor of nuclear factor kappa-B kinase-interacting protein (Ikbip), found in Mus musculus (Mouse).